A 355-amino-acid polypeptide reads, in one-letter code: Homoserine O-succinyltransferase (355 aa).

The active-site Acyl-thioester intermediate is Cys146. Lys167 and Ser196 together coordinate substrate. His239 (proton acceptor) is an active-site residue. Residue Glu241 is part of the active site. Arg253 serves as a coordination point for substrate.

The protein belongs to the MetA family.

The protein localises to the cytoplasm. The enzyme catalyses L-homoserine + succinyl-CoA = O-succinyl-L-homoserine + CoA. It participates in amino-acid biosynthesis; L-methionine biosynthesis via de novo pathway; O-succinyl-L-homoserine from L-homoserine: step 1/1. Its function is as follows. Transfers a succinyl group from succinyl-CoA to L-homoserine, forming succinyl-L-homoserine. This is Homoserine O-succinyltransferase from Methylococcus capsulatus (strain ATCC 33009 / NCIMB 11132 / Bath).